Consider the following 274-residue polypeptide: Large ribosomal subunit protein uL2 (274 aa).

The interval 221–274 is disordered; sequence RGTAMNPVDHPHGGGEGRNFGKHPVTPWGVQTKGKKTRSNKRTDKFIVRRRSKK.

It belongs to the universal ribosomal protein uL2 family. As to quaternary structure, part of the 50S ribosomal subunit. Forms a bridge to the 30S subunit in the 70S ribosome.

In terms of biological role, one of the primary rRNA binding proteins. Required for association of the 30S and 50S subunits to form the 70S ribosome, for tRNA binding and peptide bond formation. It has been suggested to have peptidyltransferase activity; this is somewhat controversial. Makes several contacts with the 16S rRNA in the 70S ribosome. This chain is Large ribosomal subunit protein uL2, found in Yersinia pseudotuberculosis serotype O:1b (strain IP 31758).